Reading from the N-terminus, the 856-residue chain is DNA endonuclease RBBP8 (856 aa).

An essential for binding to the MRN complex and for RPA focus formation on DNA damage region spans residues 25–48 (ELWSKLKECHDKDLQELLMKIGKL). Coiled-coil stretches lie at residues 38-87 (LQEL…EDRL) and 120-141 (ITEL…SEQL). 2 disordered regions span residues 143–174 (DMQK…DSPL) and 423–456 (DSEQ…DKEN). The span at 156–168 (ENPADTGDGEDGV) shows a compositional bias: acidic residues. A damage-recruitment motif region spans residues 493–515 (SSSRTKLTISLVPEKPDTKTILH). A disordered region spans residues 695–732 (SPSQSISCKERSDIPSIENKKITSEKEHESKGEPYQKQ). Basic and acidic residues predominate over residues 702-730 (CKERSDIPSIENKKITSEKEHESKGEPYQ). Thr-806 is modified (phosphothreonine). Residue Thr-818 is modified to Phosphothreonine; by ATR.

This sequence belongs to the COM1/SAE2/CtIP family. Homotetramer; formed by antiparallel association of helical extensions protruding from the N-termini of two parallel coiled-coil dimers. Interacts with the MRN complex; the interaction links DNA sensing to resection. Interacts with samhd1. In terms of processing, phosphorylation at Thr-818 by atr promotes recruitment to double-strand breaks (DSBs).

It is found in the nucleus. The protein localises to the chromosome. Its function is as follows. Endonuclease that cooperates with the MRE11-RAD50-NBN (MRN) complex in DNA-end resection, the first step of double-strand break (DSB) repair through the homologous recombination (HR) pathway. Functions downstream of the MRN complex and ATM, promotes ATR activation and its recruitment to DSBs in the S/G2 phase facilitating the generation of ssDNA. Specifically promotes the endonuclease activity of the MRN complex to clear DNA ends containing protein adducts: recruited to DSBs by nbn following phosphorylation, and promotes the endonuclease of mre11 to clear protein-DNA adducts and generate clean double-strand break ends. The MRN complex and rbbp8/CtIP are also required for chromosome alignment during metaphase. The sequence is that of DNA endonuclease RBBP8 (rbbp8) from Xenopus laevis (African clawed frog).